The following is a 414-amino-acid chain: D-mannose isomerase (414 aa).

Residues His-255 and His-390 each act as proton donor/acceptor in the active site.

It belongs to the N-acylglucosamine 2-epimerase family. Monomer.

It carries out the reaction D-mannose = D-fructose. With respect to regulation, strongly inhibited by Ag(2+), Cu(2+) and cetyltrimethyl ammonium bromide (CTAB). Catalyzes the reversible isomerization of D-mannose to D-fructose. Shows high specific activity towards mannose and fructose, and has no detectable activity towards other monosaccharides and disaccharides. This is D-mannose isomerase from Pseudomonas cannabina pv. alisalensis.